The sequence spans 150 residues: MRTVTQRVQHASVTIDGQLKSKIGKGLLVLVGIEDKDTQEDIEWLAKKITNLRIFDDENGVMNRSVIEAGGEIMVVSQFTLHASTKKGNRPSYLKASKPDIAIPMYKAFCEEVGLQLGKPVQTGTFGADMKIELLNDGPVTIIIDSQNKE.

Residues 138 to 139 (GP) carry the Gly-cisPro motif, important for rejection of L-amino acids motif.

This sequence belongs to the DTD family. Homodimer.

The protein resides in the cytoplasm. The enzyme catalyses glycyl-tRNA(Ala) + H2O = tRNA(Ala) + glycine + H(+). The catalysed reaction is a D-aminoacyl-tRNA + H2O = a tRNA + a D-alpha-amino acid + H(+). An aminoacyl-tRNA editing enzyme that deacylates mischarged D-aminoacyl-tRNAs. Also deacylates mischarged glycyl-tRNA(Ala), protecting cells against glycine mischarging by AlaRS. Acts via tRNA-based rather than protein-based catalysis; rejects L-amino acids rather than detecting D-amino acids in the active site. By recycling D-aminoacyl-tRNA to D-amino acids and free tRNA molecules, this enzyme counteracts the toxicity associated with the formation of D-aminoacyl-tRNA entities in vivo and helps enforce protein L-homochirality. The protein is D-aminoacyl-tRNA deacylase of Parabacteroides distasonis (strain ATCC 8503 / DSM 20701 / CIP 104284 / JCM 5825 / NCTC 11152).